Reading from the N-terminus, the 287-residue chain is MSHQETWHETLHDHFGQYFTVDNLLYRDTTGQQDLVIFENAALGRVMALDGVVQTTERDEFIYHEMMAHVPLIAHGGAKKVLIIGGGDGGMLREVSRHPGVEQITMVEIDAGVVTFCKQYLPRHNAGAFDDPRFKLVIADGVNFVSQSSEKFDVIISDCTDPIGPGESLFTSNFYQDCARCLNEGGIFVAQNGVCFLQQDEVVNSHRKLGHYFSDISFYQAAVPTYYGGIMTFAWASQNPALRQLDTATLAARIDETALTCRYYNAAIHHGSFALPQYLLNALSASR.

The PABS domain occupies 5 to 238; that stretch reads ETWHETLHDH…GIMTFAWASQ (234 aa). Gln33 contributes to the S-methyl-5'-thioadenosine binding site. The spermidine site is built by His64 and Asp88. S-methyl-5'-thioadenosine-binding positions include Glu108 and 140–141; that span reads DG. The active-site Proton acceptor is Asp158. 158–161 is a binding site for spermidine; it reads DCTD. An S-methyl-5'-thioadenosine-binding site is contributed by Pro165.

Belongs to the spermidine/spermine synthase family. In terms of assembly, homodimer or homotetramer.

It is found in the cytoplasm. The catalysed reaction is S-adenosyl 3-(methylsulfanyl)propylamine + putrescine = S-methyl-5'-thioadenosine + spermidine + H(+). It functions in the pathway amine and polyamine biosynthesis; spermidine biosynthesis; spermidine from putrescine: step 1/1. Functionally, catalyzes the irreversible transfer of a propylamine group from the amino donor S-adenosylmethioninamine (decarboxy-AdoMet) to putrescine (1,4-diaminobutane) to yield spermidine. The protein is Polyamine aminopropyltransferase of Sodalis glossinidius (strain morsitans).